The following is a 714-amino-acid chain: Fatty acid oxidation complex subunit alpha (714 aa).

The enoyl-CoA hydratase stretch occupies residues 1–190; the sequence is MEMASAFTLN…KLGLVDDVVP (190 aa). The interval 306 to 714 is 3-hydroxyacyl-CoA dehydrogenase; it reads APLNSVGILG…FWKTTATDLQ (409 aa).

The protein in the N-terminal section; belongs to the enoyl-CoA hydratase/isomerase family. In the central section; belongs to the 3-hydroxyacyl-CoA dehydrogenase family. As to quaternary structure, heterotetramer of two alpha chains (FadJ) and two beta chains (FadI).

The protein localises to the cytoplasm. It catalyses the reaction a (3S)-3-hydroxyacyl-CoA = a (2E)-enoyl-CoA + H2O. The catalysed reaction is a 4-saturated-(3S)-3-hydroxyacyl-CoA = a (3E)-enoyl-CoA + H2O. The enzyme catalyses a (3S)-3-hydroxyacyl-CoA + NAD(+) = a 3-oxoacyl-CoA + NADH + H(+). It carries out the reaction (3S)-3-hydroxybutanoyl-CoA = (3R)-3-hydroxybutanoyl-CoA. It functions in the pathway lipid metabolism; fatty acid beta-oxidation. Its function is as follows. Catalyzes the formation of a hydroxyacyl-CoA by addition of water on enoyl-CoA. Also exhibits 3-hydroxyacyl-CoA epimerase and 3-hydroxyacyl-CoA dehydrogenase activities. This Escherichia coli O7:K1 (strain IAI39 / ExPEC) protein is Fatty acid oxidation complex subunit alpha.